A 308-amino-acid polypeptide reads, in one-letter code: Elongation factor Ts (308 aa).

Residues 80 to 83 (TDFV) form an involved in Mg(2+) ion dislocation from EF-Tu region.

It belongs to the EF-Ts family.

It is found in the cytoplasm. Associates with the EF-Tu.GDP complex and induces the exchange of GDP to GTP. It remains bound to the aminoacyl-tRNA.EF-Tu.GTP complex up to the GTP hydrolysis stage on the ribosome. The sequence is that of Elongation factor Ts from Rhodopseudomonas palustris (strain ATCC BAA-98 / CGA009).